The chain runs to 1293 residues: Putative DNA-directed RNA polymerase 008R (1293 aa).

Cys-61, Cys-64, Cys-71, His-74, Cys-99, Cys-102, and Cys-123 together coordinate Zn(2+). A DNA-binding region spans residues 270-339 (TNRKPMAGIK…PVMVTPFNVS (70 aa)). The span at 354 to 376 (EMRDGTVHRPSEWRPSHGDHMET) shows a compositional bias: basic and acidic residues. Positions 354–390 (EMRDGTVHRPSEWRPSHGDHMETADGSPLGRVTRPSY) are disordered. Mg(2+)-binding residues include Asp-474, Asp-476, and Asp-478. Positions 724–734 (GQQYVGGSRPG) are alpha-amanitin binding. The interval 776–788 (PREVFFHAKSGRE) is bridging helix.

This sequence belongs to the RNA polymerase beta' chain family.

The catalysed reaction is RNA(n) + a ribonucleoside 5'-triphosphate = RNA(n+1) + diphosphate. In terms of biological role, component of the DNA-dependent RNA polymerase that catalyzes the transcription of DNA into RNA using the four ribonucleoside triphosphates as substrates. Largest and catalytic component of RNA polymerase II which synthesizes mRNA precursors and many functional non-coding RNAs. Forms the polymerase active center together with the second largest subunit. This is Putative DNA-directed RNA polymerase 008R from Frog virus 3 (isolate Goorha) (FV-3).